The sequence spans 131 residues: D-ribose pyranase (131 aa).

Residue His20 is the Proton donor of the active site. Substrate is bound by residues Asp28, His98, and 120–122 (YAN).

This sequence belongs to the RbsD / FucU family. RbsD subfamily. Homodecamer.

The protein resides in the cytoplasm. It catalyses the reaction beta-D-ribopyranose = beta-D-ribofuranose. Its pathway is carbohydrate metabolism; D-ribose degradation; D-ribose 5-phosphate from beta-D-ribopyranose: step 1/2. In terms of biological role, catalyzes the interconversion of beta-pyran and beta-furan forms of D-ribose. The chain is D-ribose pyranase from Chloroflexus aggregans (strain MD-66 / DSM 9485).